Consider the following 30-residue polypeptide: Cycloviolacin-O5 (30 aa).

A cross-link (cyclopeptide (Gly-Asn)) is located at residues 1-30; sequence GTPCGESCVWIPCISSAVGCSCKNKVCYKN. 3 disulfides stabilise this stretch: Cys4–Cys20, Cys8–Cys22, and Cys13–Cys27.

This is a cyclic peptide.

Probably participates in a plant defense mechanism. This is Cycloviolacin-O5 from Viola odorata (Sweet violet).